A 381-amino-acid polypeptide reads, in one-letter code: Pulmonary surfactant-associated protein B (381 aa).

The signal sequence occupies residues 1-24; that stretch reads MAESHLLQWLLLLLPTLCGPGTAA. Positions 25-65 constitute a Saposin A-type domain; the sequence is WTTSSLACAQGPEFWCQSLEQALQCRALGHCLQEVWGHVGA. A propeptide spanning residues 25–200 is cleaved from the precursor; sequence WTTSSLACAQ…PHTQDLSEQQ (176 aa). 3 consecutive Saposin B-type domains span residues 65 to 147, 204 to 281, and 295 to 370; these read ADDL…KSRQ, PLPY…SMDD, and RDSE…GTMS. 9 cysteine pairs are disulfide-bonded: Cys-69–Cys-143, Cys-72–Cys-137, Cys-100–Cys-112, Cys-208–Cys-277, Cys-211–Cys-271, Cys-235–Cys-246, Cys-299–Cys-366, Cys-302–Cys-360, and Cys-325–Cys-335. Asn-129 carries N-linked (GlcNAc...) asparagine glycosylation. Positions 280–381 are excised as a propeptide; the sequence is DDSAGPRSPT…PLQCIHSPDL (102 aa). Asn-311 carries an N-linked (GlcNAc...) asparagine glycan.

Homodimer; disulfide-linked.

It localises to the secreted. It is found in the extracellular space. The protein resides in the surface film. In terms of biological role, pulmonary surfactant-associated proteins promote alveolar stability by lowering the surface tension at the air-liquid interface in the peripheral air spaces. SP-B increases the collapse pressure of palmitic acid to nearly 70 millinewtons per meter. This chain is Pulmonary surfactant-associated protein B (SFTPB), found in Homo sapiens (Human).